A 628-amino-acid polypeptide reads, in one-letter code: Probable potassium transport system protein Kup 1 (628 aa).

Helical transmembrane passes span 18-38 (ITLA…LYAL), 58-78 (IVSL…VLLV), 106-126 (ALLM…AVIT), 141-161 (ITPE…VILF), 175-195 (FGPI…YEIV), 219-239 (IAFI…ALYA), 253-273 (WGSL…ALLL), 285-305 (LLAP…ATVI), 343-363 (IYLP…IIWF), 371-391 (AAYG…LMVV), 401-421 (WLIA…FAAN), and 425-445 (FLAG…VMTT).

It belongs to the HAK/KUP transporter (TC 2.A.72) family.

The protein localises to the cell inner membrane. It catalyses the reaction K(+)(in) + H(+)(in) = K(+)(out) + H(+)(out). Functionally, transport of potassium into the cell. Likely operates as a K(+):H(+) symporter. The chain is Probable potassium transport system protein Kup 1 from Aeromonas hydrophila subsp. hydrophila (strain ATCC 7966 / DSM 30187 / BCRC 13018 / CCUG 14551 / JCM 1027 / KCTC 2358 / NCIMB 9240 / NCTC 8049).